Consider the following 231-residue polypeptide: ATP synthase subunit a (231 aa).

The next 5 membrane-spanning stretches (helical) occupy residues 14 to 34, 78 to 98, 107 to 127, 174 to 194, and 196 to 216; these read GFLK…VLAV, YLGF…CTVI, SLST…FFGI, MIIG…MTAL, and LLTG…YIAA.

The protein belongs to the ATPase A chain family. In terms of assembly, F-type ATPases have 2 components, CF(1) - the catalytic core - and CF(0) - the membrane proton channel. CF(1) has five subunits: alpha(3), beta(3), gamma(1), delta(1), epsilon(1). CF(0) has three main subunits: a(1), b(2) and c(9-12). The alpha and beta chains form an alternating ring which encloses part of the gamma chain. CF(1) is attached to CF(0) by a central stalk formed by the gamma and epsilon chains, while a peripheral stalk is formed by the delta and b chains.

Its subcellular location is the cell inner membrane. Functionally, key component of the proton channel; it plays a direct role in the translocation of protons across the membrane. This Albidiferax ferrireducens (strain ATCC BAA-621 / DSM 15236 / T118) (Rhodoferax ferrireducens) protein is ATP synthase subunit a.